The chain runs to 94 residues: MTVSNTVDQYTIMSGDRSKIKDLLCNRLTECGWRDEVRLLCRNILVEKNGNNSLSVEQLIAEVTPKARTLVPDAVKKELLMKIRTILAENEGDN.

It belongs to the ENY2 family. As to quaternary structure, component of the nuclear pore complex (NPC)-associated AMEX complex (anchoring and mRNA export complex), composed of at least e(y)2 and xmas-2. Component of the SAGA transcription coactivator-HAT complexes, at least composed of Ada2b, e(y)2, Pcaf/Gcn5, Taf10 and Nipped-A/Trrap. Within the SAGA complex, e(y)2, Sgf11, and not/nonstop form an additional subcomplex of SAGA called the DUB module (deubiquitination module). Component of the THO complex, composed of at least e(y)2, HPR1, THO2, THOC5, THOC6 and THOC7. Interacts with e(y)1. Interacts with su(Hw) (via zinc fingers). Interacts with xmas-2; required for localization to the nuclear periphery. Interacts with the nuclear pore complex (NPC).

The protein localises to the nucleus. It is found in the nucleoplasm. The protein resides in the cytoplasm. Functionally, involved in mRNA export coupled transcription activation by association with both the AMEX and the SAGA complexes. The SAGA complex is a multiprotein complex that activates transcription by remodeling chromatin and mediating histone acetylation and deubiquitination. Within the SAGA complex, participates in a subcomplex that specifically deubiquitinates histone H2B. The SAGA complex is recruited to specific gene promoters by activators, where it is required for transcription. Required for nuclear receptor-mediated transactivation. Involved in transcription elongation by recruiting the THO complex onto nascent mRNA. The AMEX complex functions in docking export-competent ribonucleoprotein particles (mRNPs) to the nuclear entrance of the nuclear pore complex (nuclear basket). AMEX participates in mRNA export and accurate chromatin positioning in the nucleus by tethering genes to the nuclear periphery. The chain is Enhancer of yellow 2 transcription factor from Drosophila mojavensis (Fruit fly).